Reading from the N-terminus, the 117-residue chain is Fluoride-specific ion channel FluC 2 (117 aa).

A run of 4 helical transmembrane segments spans residues 1-21, 33-53, 61-81, and 94-114; these read MITILLVMLGGGIGAVLRALI, IPIATSIVNITGSLIIGFMMG, MFPFFVTGVLGGLTTFSTLSS, and IRFVVYSLLQFILGFIACFYG. Na(+)-binding residues include Gly71 and Thr74.

It belongs to the fluoride channel Fluc/FEX (TC 1.A.43) family.

The protein resides in the cell membrane. It carries out the reaction fluoride(in) = fluoride(out). Its activity is regulated as follows. Na(+) is not transported, but it plays an essential structural role and its presence is essential for fluoride channel function. Functionally, fluoride-specific ion channel. Important for reducing fluoride concentration in the cell, thus reducing its toxicity. This chain is Fluoride-specific ion channel FluC 2, found in Staphylococcus epidermidis (strain ATCC 35984 / DSM 28319 / BCRC 17069 / CCUG 31568 / BM 3577 / RP62A).